Consider the following 1396-residue polypeptide: DNA-directed RNA polymerase subunit beta' (1396 aa).

Zn(2+) contacts are provided by cysteine 70, cysteine 72, cysteine 85, and cysteine 88. Residues aspartate 460, aspartate 462, and aspartate 464 each contribute to the Mg(2+) site. The Zn(2+) site is built by cysteine 814, cysteine 889, cysteine 896, and cysteine 899.

Belongs to the RNA polymerase beta' chain family. The RNAP catalytic core consists of 2 alpha, 1 beta, 1 beta' and 1 omega subunit. When a sigma factor is associated with the core the holoenzyme is formed, which can initiate transcription. Mg(2+) serves as cofactor. It depends on Zn(2+) as a cofactor.

It carries out the reaction RNA(n) + a ribonucleoside 5'-triphosphate = RNA(n+1) + diphosphate. In terms of biological role, DNA-dependent RNA polymerase catalyzes the transcription of DNA into RNA using the four ribonucleoside triphosphates as substrates. The polypeptide is DNA-directed RNA polymerase subunit beta' (Hahella chejuensis (strain KCTC 2396)).